The following is a 661-amino-acid chain: Ubiquitin carboxyl-terminal hydrolase 25 (661 aa).

The region spanning 24-335 (LGLRNLGNTC…KAYILFFSRS (312 aa)) is the USP domain. The Nucleophile role is filled by C33. The active-site Proton acceptor is H294. Disordered stretches follow at residues 387 to 406 (GNLA…RAEQ) and 449 to 558 (FHQD…LCSS). A compositionally biased stretch (basic and acidic residues) spans 449–461 (FHQDENIAPKANK). 2 stretches are compositionally biased toward polar residues: residues 462-475 (ENSV…VNSG) and 545-558 (NGVS…LCSS).

It belongs to the peptidase C19 family.

It catalyses the reaction Thiol-dependent hydrolysis of ester, thioester, amide, peptide and isopeptide bonds formed by the C-terminal Gly of ubiquitin (a 76-residue protein attached to proteins as an intracellular targeting signal).. Its function is as follows. Recognizes and hydrolyzes the peptide bond at the C-terminal Gly of ubiquitin. Involved in the processing of poly-ubiquitin precursors as well as that of ubiquitinated proteins. The sequence is that of Ubiquitin carboxyl-terminal hydrolase 25 (UBP25) from Arabidopsis thaliana (Mouse-ear cress).